Here is a 212-residue protein sequence, read N- to C-terminus: MQLTMSSSKMKSLLKGLRYISQVFESEKEEEIQIGNPTDVKHVAHIGWDGPSANATAPSWMTEFNSGGGFESAEGVGEDDSSIKCMSEYGGRSRDLPNLPKSTRKAASEKGSPTKDKSSDKTKRRSSNKGTSSSSRRPKEATEEQDELSSWPSGLPEIPKKSRRKKKSTKETAVNGGSSRSTRRSDVDNMSEYMSETGSVRSMPQFDNRDDF.

The CRIB domain occupies 34–47; the sequence is IGNPTDVKHVAHIG. Positions 51–212 are disordered; it reads PSANATAPSW…MPQFDNRDDF (162 aa). Residues 53–65 are compositionally biased toward polar residues; it reads ANATAPSWMTEFN. Basic and acidic residues predominate over residues 106 to 121; that stretch reads AASEKGSPTKDKSSDK. The segment covering 192-202 has biased composition (polar residues); that stretch reads EYMSETGSVRS.

In terms of assembly, interacts with ARAC11/ROP1. Expressed in flowers and pollen.

It localises to the cell membrane. Functions as a downstream effector of Rho-related GTP binding proteins of the 'Rho of Plants' (ROPs) family. Participates in the propagation of ROP GTPase signals in specific cellular responses. Is involved in pollen tube growth regulation through its interaction with ARAC11/ROP1. The polypeptide is CRIB domain-containing protein RIC6 (RIC6) (Arabidopsis thaliana (Mouse-ear cress)).